Reading from the N-terminus, the 209-residue chain is MTLKFSVERLVDSEKESEEADVEEQNNLKKLEEDEEDDELCEKSGKNEPLSQTLSYFDVLLPHVQMACSNPFISGIGASGSGDQNLNTGAGGSVWQHPWLELLQSTTAAQFGDVTAGLFLQPLRKNKRIRTAFSASQLIQLEKAFEGNHYVVGNERKQLAAKLSLTETQVKVWFQNRRTKHKRVRLEGSDPNAPMSNDEDDEDDKKSVS.

Over residues methionine 1–glutamate 14 the composition is skewed to basic and acidic residues. Disordered regions lie at residues methionine 1–lysine 46 and histidine 181–serine 209. The segment covering lysine 15 to glutamate 24 has biased composition (acidic residues). Residues asparagine 126–arginine 185 constitute a DNA-binding region (homeobox).

Belongs to the EMX homeobox family. In the anterior pharynx, expressed in the I3 interneuron, the NSM and M3 motor neuron pairs, the three m2 muscle cells and the three e2 epithelial cells (at protein level).

The protein resides in the nucleus. Functionally, required for activity of the M3 pharyngeal motor neuron. The sequence is that of Homeobox protein ceh-2 from Caenorhabditis elegans.